The following is a 333-amino-acid chain: Starch-binding domain-containing protein 1 (333 aa).

Over 1–6 (MGAVWS) the chain is Extracellular. The helical transmembrane segment at 7 to 23 (ALLVGGGLAGALILWLL) threads the bilayer. The Cytoplasmic segment spans residues 24-333 (RGDSGAPGKD…KVVHGWWGIH (310 aa)). Disordered regions lie at residues 31–73 (GKDG…ELVS) and 106–139 (NARE…RVGE). Positions 50-61 (PGGGPGGGGSGG) are enriched in gly residues. Ser67 is subject to Phosphoserine. Residues 124-134 (NSETSRNQSPE) are compositionally biased toward polar residues. A phosphoserine mark is found at Ser135 and Ser162. The short motif at 181–187 (HEDWEVV) is the LIR element. 7 positions are modified to phosphoserine: Ser191, Ser192, Ser201, Ser205, Ser208, Ser216, and Ser219. The region spanning 233–332 (SVKPRQVSIQ…DKVVHGWWGI (100 aa)) is the CBM20 domain.

As to quaternary structure, interacts with the ATG8 family proteins GABARAP and GABARAPL1. Interacts with several glycogen-associated proteins, such as GYS2 (liver glycogen synthase), GDE (glycogen debranching enzyme), GBE1 (glycogen branching enzyme 1) and EPM2A (Laforin). Post-translationally, ubiquitinated, which leads to proteasomal degradation.

It localises to the preautophagosomal structure membrane. The protein resides in the endoplasmic reticulum membrane. Its subcellular location is the cell membrane. It is found in the sarcolemma. The protein localises to the T-tubule. Acts as a cargo receptor for glycogen. Delivers its cargo to an autophagic pathway called glycophagy, resulting in the transport of glycogen to lysosomes. This chain is Starch-binding domain-containing protein 1, found in Rattus norvegicus (Rat).